Here is a 509-residue protein sequence, read N- to C-terminus: Citrate synthase 3, peroxisomal (509 aa).

Active-site residues include histidine 319, histidine 358, and aspartate 414. The disordered stretch occupies residues 485–509; sequence SKESDKLGQVATSNASRRRLAGSSV. The segment covering 500–509 has biased composition (basic residues); it reads SRRRLAGSSV.

The protein belongs to the citrate synthase family. Widely expressed. Expressed throughout the shoot. Expressed in flower, silique, stem, cauline leaf, young leaf, mature leaf and senescent leaf.

It localises to the peroxisome. The catalysed reaction is oxaloacetate + acetyl-CoA + H2O = citrate + CoA + H(+). Its pathway is carbohydrate metabolism; tricarboxylic acid cycle; isocitrate from oxaloacetate: step 1/2. Its function is as follows. Peroxisomal citrate synthase required for the fatty acid respiration in seedlings, citrate being exported from peroxisomes into mitochondria during respiration of triacylglycerol (TAG). Indeed, complete respiration requires the transfer of carbon in the form of citrate from the peroxisome to the mitochondria. The sequence is that of Citrate synthase 3, peroxisomal (CSY3) from Arabidopsis thaliana (Mouse-ear cress).